Here is a 682-residue protein sequence, read N- to C-terminus: Serine/threonine-protein kinase PAK 6 (682 aa).

4 disordered regions span residues M1–E30, S132–P170, L200–S256, and P270–L367. The region spanning I12 to S25 is the CRIB domain. The interval F26–L407 is linker. 2 stretches are compositionally biased toward polar residues: residues P270–K279 and K297–L334. In terms of domain architecture, Protein kinase spans L408 to L659. Residues I414–V422 and K437 contribute to the ATP site. D527 serves as the catalytic Proton acceptor. S561 is subject to Phosphoserine; by autocatalysis.

The protein belongs to the protein kinase superfamily. STE Ser/Thr protein kinase family. STE20 subfamily. Interacts tightly with GTP-bound but not GDP-bound CDC42/p21 and RAC1. Interacts with the androgen receptor AR. Interacts with IQGAP1 and PPM1B. Post-translationally, autophosphorylated. Phosphorylated by MAP2K6/MAPKK6, leading to PAK6 activation.

The protein resides in the cytoplasm. It localises to the nucleus. The catalysed reaction is L-seryl-[protein] + ATP = O-phospho-L-seryl-[protein] + ADP + H(+). It carries out the reaction L-threonyl-[protein] + ATP = O-phospho-L-threonyl-[protein] + ADP + H(+). Serine/threonine protein kinase that plays a role in the regulation of gene transcription. The kinase activity is induced by various effectors including AR or MAP2K6/MAPKK6. Phosphorylates the DNA-binding domain of androgen receptor/AR and thereby inhibits AR-mediated transcription. Also inhibits ESR1-mediated transcription. May play a role in cytoskeleton regulation by interacting with IQGAP1. May protect cells from apoptosis through phosphorylation of BAD. This is Serine/threonine-protein kinase PAK 6 (Pak6) from Mus musculus (Mouse).